The sequence spans 88 residues: Gene 86 protein (88 aa).

This Mycobacterium phage D29 (Mycobacteriophage D29) protein is Gene 86 protein (86).